Consider the following 105-residue polypeptide: PTS system lactose-specific EIIA component (105 aa).

The PTS EIIA type-3 domain maps to 4–102 (EEMTLLGFEI…IHHLIELYKR (99 aa)). Catalysis depends on H78, which acts as the Tele-phosphohistidine intermediate. Phosphohistidine; by HPr is present on H78. D81 is a Mg(2+) binding site.

As to quaternary structure, homotrimer. The cofactor is Mg(2+).

It localises to the cytoplasm. Its function is as follows. The phosphoenolpyruvate-dependent sugar phosphotransferase system (sugar PTS), a major carbohydrate active transport system, catalyzes the phosphorylation of incoming sugar substrates concomitantly with their translocation across the cell membrane. The enzyme II LacEF PTS system is involved in lactose transport. The chain is PTS system lactose-specific EIIA component from Lactococcus lactis subsp. lactis (Streptococcus lactis).